The following is a 469-amino-acid chain: DNA polymerase delta subunit 2 (469 aa).

Met-1 bears the N-acetylmethionine mark. Ser-257 is modified (phosphoserine).

It belongs to the DNA polymerase delta/II small subunit family. In terms of assembly, component of both the DNA polymerase delta and DNA polymerase zeta complexes. Component of the tetrameric DNA polymerase delta complex (Pol-delta4), which consists of POLD1/p125, POLD2/p50, POLD3/p66/p68 and POLD4/p12, with POLD1 bearing DNA polymerase and 3' to 5' proofreading exonuclease activities. Within Pol-delta4, directly interacts with POLD1, POLD3 and POLD4. Following stress caused by DNA damaging agents or by replication stress, POLD4 is degraded and Pol-delta4 is converted into a trimeric form of the complex (Pol-delta3), which consists of POLD1, POLD2 and POLD3. Pol-delta3 is the major form occurring at S phase replication sites, as well as DNA damage sites. Also observed as a dimeric complex with POLD2 (Pol-delta2 complex). Pol-delta2 is relatively insensitive to the PCNA stimulation (2-5-fold) compared to Pol-delta4 that is stimulated by over 50-fold. Contrary to the other components of Pol-delta4, does not directly interact with PCNA. As POLD1 and POLD4, directly interacts with WRNIP1; this interaction stimulates DNA polymerase delta-mediated DNA synthesis, independently of the presence of PCNA. This stimulation may be due predominantly to an increase of initiation frequency and also to increased processivity. Directly interacts with POLDIP2 and POLDIP3. Directly interacts with KCTD13/PDIP1; in the presence of PCNA, this interaction may stimulate DNA polymerase activity. Component of the tetrameric Pol-zeta complex (Pol-zeta4), which consists of REV3L, MAD2L2, POLD2 and POLD3, with REV3L bearing DNA polymerase catalytic activity. Interacts with KCTD10.

It is found in the nucleus. In terms of biological role, accessory component of both the DNA polymerase delta complex and the DNA polymerase zeta complex. As a component of the trimeric and tetrameric DNA polymerase delta complexes (Pol-delta3 and Pol-delta4, respectively), plays a role in high fidelity genome replication, including in lagging strand synthesis, and repair. Pol-delta3 and Pol-delta4 are characterized by the absence or the presence of POLD4. They exhibit differences in catalytic activity. Most notably, Pol-delta3 shows higher proofreading activity than Pol-delta4. Although both Pol-delta3 and Pol-delta4 process Okazaki fragments in vitro, Pol-delta3 may also be better suited to fulfill this task, exhibiting near-absence of strand displacement activity compared to Pol-delta4 and stalling on encounter with the 5'-blocking oligonucleotides. Pol-delta3 idling process may avoid the formation of a gap, while maintaining a nick that can be readily ligated. Along with DNA polymerase kappa, DNA polymerase delta carries out approximately half of nucleotide excision repair (NER) synthesis following UV irradiation. Under conditions of DNA replication stress, required for the repair of broken replication forks through break-induced replication (BIR). Involved in the translesion synthesis (TLS) of templates carrying O6-methylguanine or abasic sites performed by Pol-delta4, independently of DNA polymerase zeta (REV3L) or eta (POLH). Facilitates abasic site bypass by DNA polymerase delta by promoting extension from the nucleotide inserted opposite the lesion. Also involved in TLS as a component of the DNA polymerase zeta complex. Along with POLD3, dramatically increases the efficiency and processivity of DNA synthesis of the DNA polymerase zeta complex compared to the minimal zeta complex, consisting of only REV3L and REV7. This is DNA polymerase delta subunit 2 (Pold2) from Mus musculus (Mouse).